A 378-amino-acid chain; its full sequence is Aminomethyltransferase (378 aa).

It belongs to the GcvT family. As to quaternary structure, the glycine cleavage system is composed of four proteins: P, T, L and H.

It catalyses the reaction N(6)-[(R)-S(8)-aminomethyldihydrolipoyl]-L-lysyl-[protein] + (6S)-5,6,7,8-tetrahydrofolate = N(6)-[(R)-dihydrolipoyl]-L-lysyl-[protein] + (6R)-5,10-methylene-5,6,7,8-tetrahydrofolate + NH4(+). Functionally, the glycine cleavage system catalyzes the degradation of glycine. The chain is Aminomethyltransferase from Acidobacterium capsulatum (strain ATCC 51196 / DSM 11244 / BCRC 80197 / JCM 7670 / NBRC 15755 / NCIMB 13165 / 161).